The primary structure comprises 486 residues: Malonate-semialdehyde dehydrogenase 1 (486 aa).

Phe-154, Lys-178, Glu-181, Arg-182, and Ser-231 together coordinate NAD(+). Cys-286 functions as the Nucleophile in the catalytic mechanism. Glu-386 is a binding site for NAD(+).

The protein belongs to the aldehyde dehydrogenase family. IolA subfamily. Homotetramer.

It carries out the reaction 3-oxopropanoate + NAD(+) + CoA + H2O = hydrogencarbonate + acetyl-CoA + NADH + H(+). It catalyses the reaction 2-methyl-3-oxopropanoate + NAD(+) + CoA + H2O = propanoyl-CoA + hydrogencarbonate + NADH + H(+). It participates in polyol metabolism; myo-inositol degradation into acetyl-CoA; acetyl-CoA from myo-inositol: step 7/7. Its function is as follows. Catalyzes the oxidation of malonate semialdehyde (MSA) and methylmalonate semialdehyde (MMSA) into acetyl-CoA and propanoyl-CoA, respectively. Is involved in a myo-inositol catabolic pathway. Bicarbonate, and not CO2, is the end-product of the enzymatic reaction. The chain is Malonate-semialdehyde dehydrogenase 1 from Oceanobacillus iheyensis (strain DSM 14371 / CIP 107618 / JCM 11309 / KCTC 3954 / HTE831).